The primary structure comprises 296 residues: L-isoleucine 3(1)-dioxygenase (296 aa).

H176, D178, and H267 together coordinate Fe cation.

This sequence belongs to the iron/ascorbate-dependent oxidoreductase family. L-ascorbate serves as cofactor. The cofactor is Fe(2+).

It catalyses the reaction L-isoleucine + 2-oxoglutarate + O2 = 3(1)-hydroxy-L-isoleucine + succinate + CO2. Catalyzes the hydroxylation of L-isoleucine at the C-4' position to form L-4'-hydroxyisoleucine (4'-HIL). Exhibits low activity with L-valine and L-methionine. The chain is L-isoleucine 3(1)-dioxygenase from Pantoea ananatis (strain AJ13355).